A 495-amino-acid polypeptide reads, in one-letter code: GTPase Der (495 aa).

2 consecutive EngA-type G domains span residues 3–166 (PVIA…MDAE) and 208–381 (IKLA…DCST). Residues 9-16 (GRPNVGKS), 56-60 (DTGGI), 118-121 (NKTD), 214-221 (GRPNVGKS), 261-265 (DTAGV), and 326-329 (NKWD) each bind GTP. In terms of domain architecture, KH-like spans 382–466 (KRVGTSLLTR…PIRIQFKEGE (85 aa)).

The protein belongs to the TRAFAC class TrmE-Era-EngA-EngB-Septin-like GTPase superfamily. EngA (Der) GTPase family. Associates with the 50S ribosomal subunit.

GTPase that plays an essential role in the late steps of ribosome biogenesis. This chain is GTPase Der, found in Yersinia pseudotuberculosis serotype O:3 (strain YPIII).